The primary structure comprises 303 residues: UDP-3-O-acyl-N-acetylglucosamine deacetylase (303 aa).

His78, His237, and Asp241 together coordinate Zn(2+). Catalysis depends on His264, which acts as the Proton donor.

Belongs to the LpxC family. The cofactor is Zn(2+).

It carries out the reaction a UDP-3-O-[(3R)-3-hydroxyacyl]-N-acetyl-alpha-D-glucosamine + H2O = a UDP-3-O-[(3R)-3-hydroxyacyl]-alpha-D-glucosamine + acetate. Its pathway is glycolipid biosynthesis; lipid IV(A) biosynthesis; lipid IV(A) from (3R)-3-hydroxytetradecanoyl-[acyl-carrier-protein] and UDP-N-acetyl-alpha-D-glucosamine: step 2/6. Its function is as follows. Catalyzes the hydrolysis of UDP-3-O-myristoyl-N-acetylglucosamine to form UDP-3-O-myristoylglucosamine and acetate, the committed step in lipid A biosynthesis. In Pseudomonas fluorescens (strain ATCC BAA-477 / NRRL B-23932 / Pf-5), this protein is UDP-3-O-acyl-N-acetylglucosamine deacetylase.